Reading from the N-terminus, the 505-residue chain is ATP synthase subunit alpha (505 aa).

Residue 171 to 178 (GDRQTGKT) coordinates ATP.

This sequence belongs to the ATPase alpha/beta chains family. As to quaternary structure, F-type ATPases have 2 components, CF(1) - the catalytic core - and CF(0) - the membrane proton channel. CF(1) has five subunits: alpha(3), beta(3), gamma(1), delta(1), epsilon(1). CF(0) has three main subunits: a(1), b(2) and c(9-12). The alpha and beta chains form an alternating ring which encloses part of the gamma chain. CF(1) is attached to CF(0) by a central stalk formed by the gamma and epsilon chains, while a peripheral stalk is formed by the delta and b chains.

Its subcellular location is the cell inner membrane. The enzyme catalyses ATP + H2O + 4 H(+)(in) = ADP + phosphate + 5 H(+)(out). Its function is as follows. Produces ATP from ADP in the presence of a proton gradient across the membrane. The alpha chain is a regulatory subunit. The chain is ATP synthase subunit alpha from Campylobacter hominis (strain ATCC BAA-381 / DSM 21671 / CCUG 45161 / LMG 19568 / NCTC 13146 / CH001A).